We begin with the raw amino-acid sequence, 187 residues long: UPF0301 protein YqgE (187 aa).

The protein belongs to the UPF0301 (AlgH) family.

The protein is UPF0301 protein YqgE of Escherichia coli O139:H28 (strain E24377A / ETEC).